The sequence spans 579 residues: UPF0324 membrane protein DVU_2133 (579 aa).

Transmembrane regions (helical) follow at residues 26-45 (YWAI…LFLA), 193-215 (PFNI…AVGM), 225-243 (FLVG…LMMG), 250-272 (YWGI…TVGT), 305-327 (IGIP…TFIF), 369-391 (LTLA…PAFI), 401-423 (GGAW…AFLG), 436-456 (IQNV…CARV), 476-495 (FVLG…GSLG), 515-534 (LRNW…TNFR), and 549-571 (YVAG…FYIV).

Belongs to the UPF0324 family.

It is found in the cell membrane. This is UPF0324 membrane protein DVU_2133 from Nitratidesulfovibrio vulgaris (strain ATCC 29579 / DSM 644 / CCUG 34227 / NCIMB 8303 / VKM B-1760 / Hildenborough) (Desulfovibrio vulgaris).